An 858-amino-acid polypeptide reads, in one-letter code: Receptor-like protein kinase ANXUR2 (858 aa).

A signal peptide spans 1–27 (MNEKLRILFSFLCFFYVLLVSPSQSNG). Residues 28–431 (QDISLSCGAS…VKKDFQGDKR (404 aa)) are Extracellular-facing. 4 N-linked (GlcNAc...) asparagine glycosylation sites follow: N133, N293, N303, and N331. A helical transmembrane segment spans residues 432-452 (ITAFVIGSAGGVAAVLFCALC). Residues 453 to 858 (FTMYQRKRKF…FSQIVNPKGR (406 aa)) are Cytoplasmic-facing. The Protein kinase domain maps to 521 to 794 (FDESNVIGVG…GDVLWNLEFA (274 aa)). Residues 527–535 (IGVGGFGKV) and K549 each bind ATP. Catalysis depends on D645, which acts as the Proton acceptor. The segment at 800–858 (TADGSRHRTPSNGGGSVDLGGGGGGVTVNISAGESDLGDDLSSEENSGIFSQIVNPKGR) is disordered. Gly residues predominate over residues 811–825 (NGGGSVDLGGGGGGV). Residues 843 to 858 (EENSGIFSQIVNPKGR) are compositionally biased toward polar residues.

The protein belongs to the protein kinase superfamily. Ser/Thr protein kinase family. Expressed in pollen, but not in pistils or seedlings.

It localises to the cell membrane. The catalysed reaction is L-seryl-[protein] + ATP = O-phospho-L-seryl-[protein] + ADP + H(+). It carries out the reaction L-threonyl-[protein] + ATP = O-phospho-L-threonyl-[protein] + ADP + H(+). Its function is as follows. Receptor-like protein kinase that controls pollen tube behavior by directing rupture at proper timing to release the sperm cell. The polypeptide is Receptor-like protein kinase ANXUR2 (ANX2) (Arabidopsis thaliana (Mouse-ear cress)).